The primary structure comprises 456 residues: Proline--tRNA ligase (456 aa).

It belongs to the class-II aminoacyl-tRNA synthetase family. ProS type 3 subfamily. Homodimer.

Its subcellular location is the cytoplasm. The enzyme catalyses tRNA(Pro) + L-proline + ATP = L-prolyl-tRNA(Pro) + AMP + diphosphate. In terms of biological role, catalyzes the attachment of proline to tRNA(Pro) in a two-step reaction: proline is first activated by ATP to form Pro-AMP and then transferred to the acceptor end of tRNA(Pro). In Methanococcus aeolicus (strain ATCC BAA-1280 / DSM 17508 / OCM 812 / Nankai-3), this protein is Proline--tRNA ligase.